We begin with the raw amino-acid sequence, 443 residues long: Chromosome partition protein MukF (443 aa).

Positions 209 to 237 (LDETSGNLRELQDTLNAAGDKLQAQLLRI) are leucine-zipper.

This sequence belongs to the MukF family. Interacts, and probably forms a ternary complex, with MukE and MukB via its C-terminal region. The complex formation is stimulated by calcium or magnesium. It is required for an interaction between MukE and MukB.

Its subcellular location is the cytoplasm. The protein localises to the nucleoid. Functionally, involved in chromosome condensation, segregation and cell cycle progression. May participate in facilitating chromosome segregation by condensation DNA from both sides of a centrally located replisome during cell division. Not required for mini-F plasmid partitioning. Probably acts via its interaction with MukB and MukE. Overexpression results in anucleate cells. It has a calcium binding activity. The protein is Chromosome partition protein MukF of Actinobacillus pleuropneumoniae serotype 3 (strain JL03).